Here is a 304-residue protein sequence, read N- to C-terminus: Oxygen-dependent coproporphyrinogen-III oxidase (304 aa).

Ser93 serves as a coordination point for substrate. A divalent metal cation contacts are provided by His97 and His107. His107 (proton donor) is an active-site residue. A substrate-binding site is contributed by 109–111 (NVR). Residues His146 and His176 each coordinate a divalent metal cation. The important for dimerization stretch occupies residues 241–276 (YVEFNLVYDRGTLFGLQSGGRTESILMSLPPQVRWA). 259 to 261 (GGR) is a substrate binding site.

This sequence belongs to the aerobic coproporphyrinogen-III oxidase family. As to quaternary structure, homodimer. Requires a divalent metal cation as cofactor.

Its subcellular location is the cytoplasm. It catalyses the reaction coproporphyrinogen III + O2 + 2 H(+) = protoporphyrinogen IX + 2 CO2 + 2 H2O. Its pathway is porphyrin-containing compound metabolism; protoporphyrin-IX biosynthesis; protoporphyrinogen-IX from coproporphyrinogen-III (O2 route): step 1/1. Functionally, involved in the heme biosynthesis. Catalyzes the aerobic oxidative decarboxylation of propionate groups of rings A and B of coproporphyrinogen-III to yield the vinyl groups in protoporphyrinogen-IX. The sequence is that of Oxygen-dependent coproporphyrinogen-III oxidase from Pseudomonas fluorescens (strain Pf0-1).